Here is a 458-residue protein sequence, read N- to C-terminus: ATP synthase subunit beta (458 aa).

148 to 155 lines the ATP pocket; that stretch reads GGAGVGKT.

It belongs to the ATPase alpha/beta chains family. As to quaternary structure, F-type ATPases have 2 components, CF(1) - the catalytic core - and CF(0) - the membrane proton channel. CF(1) has five subunits: alpha(3), beta(3), gamma(1), delta(1), epsilon(1). CF(0) has three main subunits: a(1), b(2) and c(9-12). The alpha and beta chains form an alternating ring which encloses part of the gamma chain. CF(1) is attached to CF(0) by a central stalk formed by the gamma and epsilon chains, while a peripheral stalk is formed by the delta and b chains.

The protein localises to the cell inner membrane. It catalyses the reaction ATP + H2O + 4 H(+)(in) = ADP + phosphate + 5 H(+)(out). In terms of biological role, produces ATP from ADP in the presence of a proton gradient across the membrane. The catalytic sites are hosted primarily by the beta subunits. This is ATP synthase subunit beta from Halorhodospira halophila (strain DSM 244 / SL1) (Ectothiorhodospira halophila (strain DSM 244 / SL1)).